The sequence spans 108 residues: Resistin (108 aa).

A signal peptide spans 1–18 (MKALCLLLLPVLGLLVSS). Intrachain disulfides connect cysteine 51–cysteine 104, cysteine 63–cysteine 103, cysteine 72–cysteine 89, cysteine 74–cysteine 91, and cysteine 78–cysteine 93.

This sequence belongs to the resistin/FIZZ family. Homodimer; disulfide-linked. Interacts with DEFA1. As to expression, expressed in white adipose tissue (at protein level). Widely expressed, with particularly strong expression in lung, bone marrow, breast and peripheral blood. Expressed strongly in bone marrow and at lower levels in lung, but not detected in other tissues. Isoform 2 is detected in adipose tissue, bone marrow, brain, lung, peripheral blood, placenta and thymus.

It localises to the secreted. Functionally, hormone that seems to suppress insulin ability to stimulate glucose uptake into adipose cells. Potentially links obesity to diabetes. Promotes chemotaxis in myeloid cells. This chain is Resistin (RETN), found in Homo sapiens (Human).